The following is a 346-amino-acid chain: Uroporphyrinogen decarboxylase (346 aa).

Substrate is bound by residues 23–27, D72, Y155, S209, and H322; that span reads RQAGR.

It belongs to the uroporphyrinogen decarboxylase family. Homodimer.

It localises to the cytoplasm. The catalysed reaction is uroporphyrinogen III + 4 H(+) = coproporphyrinogen III + 4 CO2. The protein operates within porphyrin-containing compound metabolism; protoporphyrin-IX biosynthesis; coproporphyrinogen-III from 5-aminolevulinate: step 4/4. Catalyzes the decarboxylation of four acetate groups of uroporphyrinogen-III to yield coproporphyrinogen-III. In Anaeromyxobacter dehalogenans (strain 2CP-C), this protein is Uroporphyrinogen decarboxylase.